Here is a 1346-residue protein sequence, read N- to C-terminus: DNA-directed RNA polymerase subunit beta (1346 aa).

This sequence belongs to the RNA polymerase beta chain family. As to quaternary structure, the RNAP catalytic core consists of 2 alpha, 1 beta, 1 beta' and 1 omega subunit. When a sigma factor is associated with the core the holoenzyme is formed, which can initiate transcription.

The enzyme catalyses RNA(n) + a ribonucleoside 5'-triphosphate = RNA(n+1) + diphosphate. In terms of biological role, DNA-dependent RNA polymerase catalyzes the transcription of DNA into RNA using the four ribonucleoside triphosphates as substrates. This Psychromonas ingrahamii (strain DSM 17664 / CCUG 51855 / 37) protein is DNA-directed RNA polymerase subunit beta.